Consider the following 290-residue polypeptide: uncharacterized protein (290 aa).

The ABC transporter domain occupies 2–238 (LKTENLSVGY…EIVNELYDLK (237 aa)). 34-41 (GPNGAGKS) provides a ligand contact to ATP.

This sequence belongs to the ABC transporter superfamily.

This is an uncharacterized protein from Methanocaldococcus jannaschii (strain ATCC 43067 / DSM 2661 / JAL-1 / JCM 10045 / NBRC 100440) (Methanococcus jannaschii).